Reading from the N-terminus, the 60-residue chain is Ferredoxin (60 aa).

2 4Fe-4S ferredoxin-type domains span residues 2-29 (KVRVDADACIGCGVCENLCPDVFQLGDD) and 30-60 (GKAKVLQPETDLPCAKDAADSCPTGAISVEE). Residues cysteine 10, cysteine 13, and cysteine 16 each coordinate [4Fe-4S] cluster. A disulfide bond links cysteine 20 and cysteine 43. Cysteine 51 is a [4Fe-4S] cluster binding site.

Monomer. The cofactor is [4Fe-4S] cluster.

In terms of biological role, ferredoxins are iron-sulfur proteins that transfer electrons in a wide variety of metabolic reactions. This is Ferredoxin (fdx) from Thermotoga maritima (strain ATCC 43589 / DSM 3109 / JCM 10099 / NBRC 100826 / MSB8).